A 322-amino-acid chain; its full sequence is UPF0324 membrane protein BB4178 (322 aa).

The next 10 helical transmembrane spans lie at 13-35, 50-69, 76-98, 108-127, 139-161, 171-193, 209-231, 241-260, 273-292, and 296-318; these read FIRQ…YGNF, FTAR…NISI, GLPG…TVAG, TAML…VLAF, AVAV…VIYH, ALGI…ASNI, VALL…AAGA, VPWF…LDIL, VFVL…FAQI, and GPRV…YGIV.

It belongs to the UPF0324 family.

It localises to the cell membrane. The sequence is that of UPF0324 membrane protein BB4178 from Bordetella bronchiseptica (strain ATCC BAA-588 / NCTC 13252 / RB50) (Alcaligenes bronchisepticus).